A 500-amino-acid polypeptide reads, in one-letter code: MTEHIQDENKLIAERRAKLEHVRKNCPANGHPNTFRRKHKAAELQAQFGDKTKEELEALGFQTAIAGRVMAKRGPFLVLQDVSGRIQAYADKGVQADLKDRYAGLDIGDIIGVEGTLHLSGKGDLYVNMERYELLTKALRPLPEKFHGLTDQETRYRQRYVDLIVNEDSREAFKMRSKVVAAIRNFMIKKEFMEVETPMMHVIPGGASARPFVTHHNALDIEMYLRIAPELYLKRLVVGGFERVFEINRNFRNEGLSPRHNPEFTMMEFYMAYADYKDLIDLTEEMLSSIAKELLGDTKLPYGEHVIDFGGPYTRMSMLEAIKHYNPDNATIQAMTYEEVKNIDFMRKLAKDVGIETETFWSCGQLLEEIFGETAEPKLMQPTFITGYPADISPLARRSDGNDFITDRFEFFIGGREVANGFSELNDAEDQDNRFKAQVEAKDAGDDEAMFYDADFITALEHGLPPTAGQGIGIDRLVMLFTNTHTIRDVILFPAMRPQA.

2 residues coordinate Mg(2+): Glu410 and Glu417.

It belongs to the class-II aminoacyl-tRNA synthetase family. Homodimer. Requires Mg(2+) as cofactor.

It is found in the cytoplasm. It carries out the reaction tRNA(Lys) + L-lysine + ATP = L-lysyl-tRNA(Lys) + AMP + diphosphate. The sequence is that of Lysine--tRNA ligase from Shewanella amazonensis (strain ATCC BAA-1098 / SB2B).